A 463-amino-acid chain; its full sequence is MAGLSRILLSCTLACLLAGQAAQASVDDPTRAGGDNRVRALRADQARRDVLLTACRDDPGHRRGEPDCVNAERAQALQQWQAAAMTSVDAAFSDLAGALRNAAPRRMEAAIVRLTRQLQPLVYSMMTLLVLLTGYALLARRDRPFEWHIRHALLVAVVTSLALSPDHYLSTVVAGVQDVAGWLSGPWTAPDGAAGRGGLAQLDQFAAQAQAWVAQLAGQAANDANPGSAVNWLLCAMIVATSAGGWLCLAASLLIVPGLIVTLLLSLGPLFLVLLLFPALQRWTNAWLGALVRALVFMALGTPAVGLLSDVLAGALPAGLPQRFATDPLRSTMLAATLCATATLMLLTLVPLASSVNAGLRRRLWPNAAHPGLAQAHRQAAARQYAPRPAAAAAAAGPHQAGTYAASATPAPAPARPAPSFPAHAYRQYALGGARRPPPRVRRDDRPAPAPDRRVLPRKPNLP.

An N-terminal signal peptide occupies residues methionine 1–alanine 24. Transmembrane regions (helical) follow at residues leucine 118 to leucine 138, tryptophan 232 to serine 252, leucine 253 to valine 273, alanine 294 to glycine 314, and methionine 333 to alanine 353. The segment covering alanine 376–proline 410 has biased composition (low complexity). Residues alanine 376 to proline 463 form a disordered region. Residues alanine 411–serine 420 are compositionally biased toward pro residues. Residues valine 441 to valine 455 show a composition bias toward basic and acidic residues.

It localises to the cell membrane. The chain is Type IV secretion system protein PtlD homolog (ptlD) from Bordetella parapertussis (strain 12822 / ATCC BAA-587 / NCTC 13253).